A 1183-amino-acid polypeptide reads, in one-letter code: Rab11 family-interacting protein 3 (1183 aa).

Residues 423–448 are disordered; the sequence is AEDPSTESLPRKNGQEESKSALPVST. Residues 431 to 441 show a composition bias toward basic and acidic residues; the sequence is LPRKNGQEESK. 2 consecutive EF-hand domains span residues 706-741 and 738-773; these read EEQS…YGAE and YGAE…ISNE. Ca(2+)-binding residues include aspartate 719, aspartate 721, aspartate 723, glutamate 730, aspartate 751, serine 753, and aspartate 762. The stretch at 902–1121 forms a coiled coil; sequence ELEKDSLESE…NGQIINLSIQ (220 aa). Residues 911 to 1015 are ARF-binding domain (ABD); the sequence is EEQHARLRQE…LQDEADDITQ (105 aa). Positions 1005 to 1044 are disordered; the sequence is KLQDEADDITQRLNEESESRRKMSDKLSHERHTNQKEKEC. In terms of domain architecture, FIP-RBD spans 1121–1183; sequence QGAKSLFTES…ESNPSILEVK (63 aa).

The protein resides in the recycling endosome membrane. It localises to the cytoplasm. The protein localises to the cytoskeleton. It is found in the microtubule organizing center. Its subcellular location is the centrosome. The protein resides in the cleavage furrow. It localises to the midbody. The protein localises to the golgi apparatus membrane. It is found in the golgi apparatus. Its subcellular location is the trans-Golgi network membrane. In terms of biological role, downstream effector molecule for Rab11 GTPase which acts as a regulator of endocytic trafficking, cytokinesis and intracellular ciliogenesis by participating in membrane delivery. This Danio rerio (Zebrafish) protein is Rab11 family-interacting protein 3 (rab11fip3).